We begin with the raw amino-acid sequence, 543 residues long: Carboxypeptidase Y homolog A (543 aa).

Residues 1 to 17 (MRVLPATLLVGAATAAA) form the signal peptide. Positions 18-124 (PPFQQILGLP…KLEAYDLRVK (107 aa)) are excised as a propeptide. 5 cysteine pairs are disulfide-bonded: C179-C419, C313-C327, C337-C360, C344-C353, and C382-C389. N210 carries N-linked (GlcNAc...) asparagine glycosylation. S266 is a catalytic residue. D458 is a catalytic residue. N509 is a glycosylation site (N-linked (GlcNAc...) asparagine). The active site involves H520.

This sequence belongs to the peptidase S10 family.

It is found in the vacuole. It carries out the reaction Release of a C-terminal amino acid with broad specificity.. In terms of biological role, vacuolar carboxypeptidase involved in degradation of small peptides. Digests preferentially peptides containing an aliphatic or hydrophobic residue in P1' position, as well as methionine, leucine or phenylalanine in P1 position of ester substrate. This chain is Carboxypeptidase Y homolog A (cpyA), found in Aspergillus fumigatus (strain ATCC MYA-4609 / CBS 101355 / FGSC A1100 / Af293) (Neosartorya fumigata).